The primary structure comprises 503 residues: REST corepressor 2 (503 aa).

Positions 1 to 62 (MPSVMEKSHG…IPECKPDNTS (62 aa)) are disordered. An ELM2 domain is found at 41–126 (SMIRVGSDYQ…RSLADLANFT (86 aa)). Residues 127–178 (PFPEEWSVEDKVLFEQAFSFHGKSFQRIQQMLPEKLIPSLVKYYYSWKKTRS) form the SANT 1 domain. Coiled-coil stretches lie at residues 182-206 (VMDR…DQIK) and 286-314 (QLET…SLEG). Positions 327–378 (KLNARWTTDEQLLAVQAVRKYGKDFQAISEVLGNKTPSQVKTFFISYRRRFN) constitute an SANT 2 domain. The disordered stretch occupies residues 385-503 (EWEAEQEPSP…VGSHAESTFS (119 aa)). Residues 399–412 (TDMSNKTSGSSQTP) are compositionally biased toward polar residues. Residues 423-442 (SVSSSSQPAPPAAAAAASLS) are compositionally biased toward low complexity.

The protein belongs to the CoREST family.

The protein resides in the nucleus. In terms of biological role, may act as a component of a corepressor complex that represses transcription. The polypeptide is REST corepressor 2 (rcor2) (Xenopus laevis (African clawed frog)).